Here is a 758-residue protein sequence, read N- to C-terminus: 5-methyltetrahydropteroyltriglutamate--homocysteine methyltransferase (758 aa).

Residues 17-20 and lysine 117 each bind 5-methyltetrahydropteroyltri-L-glutamate; that span reads RELK. L-homocysteine-binding positions include 434–436 and glutamate 487; that span reads IGS. L-methionine is bound by residues 434–436 and glutamate 487; that span reads IGS. 5-methyltetrahydropteroyltri-L-glutamate contacts are provided by residues 518–519 and tryptophan 564; that span reads RC. Aspartate 602 contributes to the L-homocysteine binding site. Aspartate 602 contacts L-methionine. Glutamate 608 contributes to the 5-methyltetrahydropteroyltri-L-glutamate binding site. Zn(2+) is bound by residues histidine 644, cysteine 646, and glutamate 668. Histidine 697 acts as the Proton donor in catalysis. A Zn(2+)-binding site is contributed by cysteine 729.

The protein belongs to the vitamin-B12 independent methionine synthase family. It depends on Zn(2+) as a cofactor.

The catalysed reaction is 5-methyltetrahydropteroyltri-L-glutamate + L-homocysteine = tetrahydropteroyltri-L-glutamate + L-methionine. The protein operates within amino-acid biosynthesis; L-methionine biosynthesis via de novo pathway; L-methionine from L-homocysteine (MetE route): step 1/1. Its function is as follows. Catalyzes the transfer of a methyl group from 5-methyltetrahydrofolate to homocysteine resulting in methionine formation. The sequence is that of 5-methyltetrahydropteroyltriglutamate--homocysteine methyltransferase from Sodalis glossinidius (strain morsitans).